Consider the following 140-residue polypeptide: Hemoglobin subunit beta (140 aa).

Residues 1 to 140 (GSDLVSGFWG…VGDALAKAYH (140 aa)) enclose the Globin domain. Heme b-binding residues include histidine 57 and histidine 86.

Belongs to the globin family. As to quaternary structure, heterotetramer of two alpha chains and two beta chains. As to expression, red blood cells.

Functionally, involved in oxygen transport from the lung to the various peripheral tissues. This is Hemoglobin subunit beta (HBB) from Pelophylax lessonae (Pool frog).